A 435-amino-acid chain; its full sequence is MSTGFFGDIQKVRYEGPESDNPLAFRHYNADEIVLGKRMEDHLRFAVAYWHSFAWEGGDPFGGRTFDRPWFSNEIDAAKLKADVAFEFFSLLGAPYYCFHDADVRPEGRNFAENTRYLNEIVDIFEKKQAETGMKLLWGTANLFSNRRYMAGAATNPDPDVFAFAAATVKTCIDATKRLGGENYVLWGGREGYETLLNTDLSRELDHMGRFLSLVVEYKHKIGFKGTILIEPKPQEPTKHQYDYDVATVYGFLKRYGLENEVKVNIEQGHAILAGHSFEHELALARTLGIFGSIDMNRNDYQSGWDTDQFPNNVPEMALAYYQVLLAGGFTTGGTNFDAKLRRQSLDSQDLLIGHIGGMDCCARGLKAAARMLEDGALSKPLDERYAGWNGEFGKRLLSGLSLDQIAGEVEAKDINPQPKSGRQEYLENIVNHYV.

Catalysis depends on residues His-100 and Asp-103. Residues Glu-231, Glu-267, His-270, Asp-295, Asp-306, Asp-308, and Asp-338 each contribute to the Mg(2+) site.

It belongs to the xylose isomerase family. Homotetramer. It depends on Mg(2+) as a cofactor.

Its subcellular location is the cytoplasm. The catalysed reaction is alpha-D-xylose = alpha-D-xylulofuranose. In Brucella suis biovar 1 (strain 1330), this protein is Xylose isomerase.